We begin with the raw amino-acid sequence, 1381 residues long: Hepatocyte growth factor receptor (1381 aa).

A signal peptide spans 1-24 (MKAPAVLAPGILLLLFTLVQRSNG). Residues 25–932 (ECKEALTKSE…VIVQPDQNFT (908 aa)) are Extracellular-facing. The 489-residue stretch at 27–515 (KEALTKSEMN…TGKKITKIPL (489 aa)) folds into the Sema domain. An N-linked (GlcNAc...) asparagine glycan is attached at Asn45. Disulfide bonds link Cys95–Cys101, Cys98–Cys160, Cys133–Cys141, and Cys172–Cys175. An N-linked (GlcNAc...) asparagine glycan is attached at Asn106. N-linked (GlcNAc...) asparagine glycosylation is present at Asn149. N-linked (GlcNAc...) asparagine glycosylation is present at Asn202. Intrachain disulfides connect Cys298/Cys363 and Cys385/Cys397. A glycan (N-linked (GlcNAc...) asparagine) is linked at Asn399. Cystine bridges form between Cys520–Cys538, Cys526–Cys561, Cys529–Cys545, and Cys541–Cys551. 3 consecutive IPT/TIG domains span residues 563–655 (PTIY…FSYV), 657–739 (PIIT…FSYR), and 742–836 (PIVY…LIYV). An O-linked (Man) threonine glycan is attached at Thr582. Residues Asn607 and Asn635 are each glycosylated (N-linked (GlcNAc...) asparagine). Thr676 and Thr761 each carry an O-linked (Man) threonine glycan. Residues Asn785, Asn879, and Asn930 are each glycosylated (N-linked (GlcNAc...) asparagine). The helical transmembrane segment at 933–955 (GLIAGVVSISIALLLLLGLFLWL) threads the bilayer. Residues 956 to 1381 (KKRKQIKDLG…QDNPDGEVDT (426 aa)) lie on the Cytoplasmic side of the membrane. Ser966 carries the post-translational modification Phosphoserine. At Thr977 the chain carries Phosphothreonine. Phosphoserine is present on residues Ser990, Ser997, and Ser1000. Position 1003 is a phosphotyrosine (Tyr1003). In terms of domain architecture, Protein kinase spans 1078–1345 (VHFNEVIGRG…RISAIFSTFI (268 aa)). ATP is bound by residues 1084 to 1092 (IGRGHFGCV) and Lys1110. Asp1204 functions as the Proton acceptor in the catalytic mechanism. Residues 1212–1381 (LDEKFTVKVA…QDNPDGEVDT (170 aa)) form an interaction with RANBP9 region. Residue Tyr1230 is modified to Phosphotyrosine. Tyr1234 and Tyr1235 each carry phosphotyrosine; by autocatalysis. Thr1289 carries the phosphothreonine modification. The interaction with MUC20 stretch occupies residues 1320–1359 (WHPKAEMRPSFSELVSRISAIFSTFIGEHYVHVNATYVNV). 2 positions are modified to phosphotyrosine; by autocatalysis: Tyr1349 and Tyr1356. Position 1365 is a phosphotyrosine (Tyr1365).

This sequence belongs to the protein kinase superfamily. Tyr protein kinase family. As to quaternary structure, heterodimer made of an alpha chain (50 kDa) and a beta chain (145 kDa) which are disulfide linked. Binds PLXNB1. Interacts when phosphorylated with downstream effectors including STAT3, PIK3R1, SRC, PCLG1, GRB2 and GAB1. Interacts with SPSB1, SPSB2 and SPSB4. Interacts with INPP5D/SHIP1. When phosphorylated at Tyr-1356, interacts with INPPL1/SHIP2. Interacts with RANBP9 and RANBP10, as well as SPSB1, SPSB2, SPSB3 and SPSB4. SPSB1 binding occurs in the presence and in the absence of HGF, however HGF treatment has a positive effect on this interaction. Interacts with MUC20; prevents interaction with GRB2 and suppresses hepatocyte growth factor-induced cell proliferation. Interacts with GRB10. Interacts with PTPN1 and PTPN2. Interacts with tensin TNS3. Interacts (when phosphorylated) with tensin TNS4 (via SH2 domain); the interaction increases MET protein stability by inhibiting MET endocytosis and subsequent lysosomal degradation. Post-translationally, autophosphorylated in response to ligand binding on Tyr-1234 and Tyr-1235 in the kinase domain leading to further phosphorylation of Tyr-1349 and Tyr-1356 in the C-terminal multifunctional docking site. Dephosphorylated by PTPRJ at Tyr-1349 and Tyr-1365. Dephosphorylated by PTPN1 and PTPN2. Ubiquitinated. Ubiquitination by CBL regulates the receptor stability and activity through proteasomal degradation. In terms of processing, O-mannosylation of IPT/TIG domains by TMEM260 is required for protein maturation. O-mannosylated residues are composed of single mannose glycans that are not elongated or modified.

The protein localises to the membrane. It carries out the reaction L-tyrosyl-[protein] + ATP = O-phospho-L-tyrosyl-[protein] + ADP + H(+). With respect to regulation, in its inactive state, the C-terminal tail interacts with the catalytic domain and inhibits the kinase activity. Upon ligand binding, the C-terminal tail is displaced and becomes phosphorylated, thus increasing the kinase activity. Receptor tyrosine kinase that transduces signals from the extracellular matrix into the cytoplasm by binding to hepatocyte growth factor/HGF ligand. Regulates many physiological processes including proliferation, scattering, morphogenesis and survival. Ligand binding at the cell surface induces autophosphorylation of MET on its intracellular domain that provides docking sites for downstream signaling molecules. Following activation by ligand, interacts with the PI3-kinase subunit PIK3R1, PLCG1, SRC, GRB2, STAT3 or the adapter GAB1. Recruitment of these downstream effectors by MET leads to the activation of several signaling cascades including the RAS-ERK, PI3 kinase-AKT, or PLCgamma-PKC. The RAS-ERK activation is associated with the morphogenetic effects while PI3K/AKT coordinates prosurvival effects. During embryonic development, MET signaling plays a role in gastrulation, development and migration of muscles and neuronal precursors, angiogenesis and kidney formation. In adults, participates in wound healing as well as organ regeneration and tissue remodeling. Also promotes differentiation and proliferation of hematopoietic cells. The sequence is that of Hepatocyte growth factor receptor (MET) from Aotus nancymaae (Ma's night monkey).